The sequence spans 122 residues: Ribosomal protein eL22-like (122 aa).

A phosphoserine mark is found at Ser-112, Ser-118, and Ser-120.

Belongs to the eukaryotic ribosomal protein eL22 family.

This chain is Ribosomal protein eL22-like (RPL22L1), found in Bos taurus (Bovine).